The sequence spans 272 residues: Homeobox protein Hox-D12 (272 aa).

Residues 204–263 (SRRKRKPYTKQQIAELENEFLANEFINRQKRKELSDRLNLSDQQVKIWFQNRRMKKKRLV) constitute a DNA-binding region (homeobox).

It belongs to the Abd-B homeobox family.

Its subcellular location is the nucleus. Functionally, sequence-specific transcription factor which is part of a developmental regulatory system that provides cells with specific positional identities on the anterior-posterior axis. This Heterodontus francisci (Horn shark) protein is Homeobox protein Hox-D12 (HOXD12).